The sequence spans 462 residues: MAEGEEPEKKRRRIEELNEKMVVDGGSGDRSEWQGRWDHVRKFLERTGPFTHPDFEASTESLQFLLDTCKILVIGAGGLGCELLKDLALSGFRHIHVVDMDTIDVSNLNRQFLFRPKDVGRPKAEVAADFVNDRVPGCSVVPHFKKIQDLDETFYRQFHIVVCGLDSVIARRWMNGMLLSLLIYEDGVLDPSSIIPLIDGGTEGFKGNARVILPGMTACIDCTLELYPPQINFPMCTIASMPRLPEHCVEYVRMLLWPKEKPFGDGVVLDGDDPKHIQWVYQKSLERAAEFNITGVTYRLTQGVVKRIIPAVASTNAVIAAACATEVFKIATSAYVPLNNYLVFNDVDGLYTYTFEAERKENCSACSQVPQDMQFTPSAKLQEVLDYLTENASLQMKSPAITTTLDGKNKTLYLQTVASIEERTRPNLSKTLKELGLVDGQELAVADVTTPQTVLFKLKFIS.

The tract at residues 52–69 is interaction with ube2m N-terminus; sequence HPDFEASTESLQFLLDTC. ATP is bound by residues 99-123 and 147-170; these read DMDT…GRPK and IQDL…SVIA. 2 interaction with ube2m N-terminus regions span residues 156–160 and 191–216; these read RQFHI and PSSI…LPGM. Positions 226–228 are interaction with nedd8; it reads LYP. Cys-236 (glycyl thioester intermediate) is an active-site residue. 2 interaction with nae1 regions span residues 241-247 and 291-294; these read MPRLPEH and FNIT. The interval 330-337 is interaction with ube2m N-terminus; it reads IATSAYVP. Residues 351 to 356 form an interaction with nedd8 region; that stretch reads YTYTFE. Residues 367–462 are interaction with ube2m core domain; that stretch reads SQVPQDMQFT…TVLFKLKFIS (96 aa).

The protein belongs to the ubiquitin-activating E1 family. UBA3 subfamily. Heterodimer of uba3 and nae1. Interacts with nedd8, ube2f and ube2m.

It carries out the reaction ATP + [NEDD8 protein] + [E1 NEDD8-activating enzyme]-L-cysteine = AMP + diphosphate + [E1 NEDD8-activating enzyme]-S-[NEDD8 protein]-yl-L-cysteine.. It functions in the pathway protein modification; protein neddylation. In terms of biological role, catalytic subunit of the dimeric uba3-nae1 E1 enzyme. E1 activates nedd8 by first adenylating its C-terminal glycine residue with ATP, thereafter linking this residue to the side chain of the catalytic cysteine, yielding a nedd8-uba3 thioester and free AMP. E1 finally transfers nedd8 to the catalytic cysteine of ube2m. This Danio rerio (Zebrafish) protein is NEDD8-activating enzyme E1 catalytic subunit (uba3).